The chain runs to 140 residues: Thioredoxin M-type, chloroplastic (140 aa).

Residues 1–34 (MALVARRAAVPSARSSARPAFARAAPRRSVVVRA) constitute a chloroplast transit peptide. A Thioredoxin domain is found at 35-140 (EAGAVNDDTF…IVQTVEKYLN (106 aa)). Catalysis depends on nucleophile residues cysteine 64 and cysteine 67. Cysteine 64 and cysteine 67 form a disulfide bridge.

It belongs to the thioredoxin family. Plant M-type subfamily. In terms of assembly, forms a complex with heterodimeric ferredoxin-thioredoxin reductase (FTR) and ferredoxin.

The protein localises to the plastid. It is found in the chloroplast. Participates in various redox reactions through the reversible oxidation of the active center dithiol to a disulfide. The M form is known to activate NADP-malate dehydrogenase. The sequence is that of Thioredoxin M-type, chloroplastic (TRXM) from Chlamydomonas reinhardtii (Chlamydomonas smithii).